The sequence spans 460 residues: Mitochondrial distribution and morphology protein 34 (460 aa).

Positions 1-196 constitute an SMP-LTD domain; sequence MSFKFDWESL…LPGIIHRLSQ (196 aa). The segment covering 304 to 321 has biased composition (basic residues); the sequence is HNHQAPKRRTIKYKRKSK. Disordered stretches follow at residues 304 to 356 and 368 to 460; these read HNHQ…PSRE and EPSS…AYSG. Low complexity-rich tracts occupy residues 330 to 355 and 393 to 405; these read STEVTTRETTPLPTSSTPLETSTPSR and SPPSLDLSIDTSL.

Belongs to the MDM34 family. Component of the ER-mitochondria encounter structure (ERMES) or MDM complex, composed of MMM1, MDM10, MDM12 and MDM34.

Its subcellular location is the mitochondrion outer membrane. Functionally, component of the ERMES/MDM complex, which serves as a molecular tether to connect the endoplasmic reticulum (ER) and mitochondria. Components of this complex are involved in the control of mitochondrial shape and protein biogenesis, and function in nonvesicular lipid trafficking between the ER and mitochondria. MDM34 is required for the interaction of the ER-resident membrane protein MMM1 and the outer mitochondrial membrane-resident beta-barrel protein MDM10. The polypeptide is Mitochondrial distribution and morphology protein 34 (Yarrowia lipolytica (strain CLIB 122 / E 150) (Yeast)).